We begin with the raw amino-acid sequence, 199 residues long: Peroxiredoxin 2 (199 aa).

Positions 8-166 (AFIGQPAPNF…TLRLIQAFQF (159 aa)) constitute a Thioredoxin domain. C53 (cysteine sulfenic acid (-SOH) intermediate) is an active-site residue.

The protein belongs to the peroxiredoxin family. AhpC/Prx1 subfamily. As to quaternary structure, homodimer; disulfide-linked, upon oxidation.

It carries out the reaction a hydroperoxide + [thioredoxin]-dithiol = an alcohol + [thioredoxin]-disulfide + H2O. Its function is as follows. Thiol-specific peroxidase that catalyzes the reduction of hydrogen peroxide and organic hydroperoxides to water and alcohols, respectively. Plays a role in cell protection against oxidative stress by detoxifying peroxides and as sensor of hydrogen peroxide-mediated signaling events. The protein is Peroxiredoxin 2 (tsa-2) of Brugia malayi (Filarial nematode worm).